A 142-amino-acid polypeptide reads, in one-letter code: uncharacterized protein (142 aa).

A signal peptide spans 1-26 (MITEFIKSFLLFFFLPFFLSMPMIFA).

This is an uncharacterized protein from Schizosaccharomyces pombe (strain 972 / ATCC 24843) (Fission yeast).